A 299-amino-acid chain; its full sequence is UDP-N-acetylenolpyruvoylglucosamine reductase (299 aa).

One can recognise an FAD-binding PCMH-type domain in the interval 26–191; sequence GIGGPAKYFV…VSATFQLNAS (166 aa). Residue R170 is part of the active site. The active-site Proton donor is the C218. Residue E288 is part of the active site.

The protein belongs to the MurB family. It depends on FAD as a cofactor.

The protein localises to the cytoplasm. It carries out the reaction UDP-N-acetyl-alpha-D-muramate + NADP(+) = UDP-N-acetyl-3-O-(1-carboxyvinyl)-alpha-D-glucosamine + NADPH + H(+). Its pathway is cell wall biogenesis; peptidoglycan biosynthesis. Cell wall formation. This Protochlamydia amoebophila (strain UWE25) protein is UDP-N-acetylenolpyruvoylglucosamine reductase.